A 123-amino-acid chain; its full sequence is Large ribosomal subunit protein uL22c (123 aa).

This sequence belongs to the universal ribosomal protein uL22 family. As to quaternary structure, part of the 50S ribosomal subunit.

It is found in the plastid. The protein localises to the chloroplast. In terms of biological role, this protein binds specifically to 23S rRNA. The globular domain of the protein is located near the polypeptide exit tunnel on the outside of the subunit, while an extended beta-hairpin is found that lines the wall of the exit tunnel in the center of the 70S ribosome. This Chara vulgaris (Common stonewort) protein is Large ribosomal subunit protein uL22c (rpl22).